The chain runs to 268 residues: LOB domain-containing protein 13 (268 aa).

Residues 51–152 enclose the LOB domain; that stretch reads TPCAACKLLR…SELTTVRTEI (102 aa). The segment at 191–268 is disordered; the sequence is LLPPPPPPPP…SSDNNVHYFD (78 aa). 2 stretches are compositionally biased toward pro residues: residues 192–205 and 212–222; these read LPPPPPPPPTPRPP and PAPPPTPPVSL. A compositionally biased stretch (low complexity) spans 223–243; the sequence is PSPSMVVSSSSSSNSSATNSM. A compositionally biased stretch (polar residues) spans 250 to 268; sequence STAGYSNSLSSDNNVHYFD.

It belongs to the LOB domain-containing protein family. In terms of tissue distribution, expressed in shoots and roots and at low levels in flowers, but not in leaves or inflorescence stems.

The polypeptide is LOB domain-containing protein 13 (LBD13) (Arabidopsis thaliana (Mouse-ear cress)).